Here is a 216-residue protein sequence, read N- to C-terminus: MTTSAASQASLPRGRRTARPSGDDRELAILATAENLLEDRPLADISVDDLAKGAGISRPTFYFYFPSKEAVLLTLLDRVVNQADMALQTLAENPADTDRENMWRTGINVFFETFGSHKAVTRAGQAARATSVEVAELWSTFMQKWIAYTAAVIDAERDRGAAPRTLPAHELATALNLMNERTLFASFAGEQPSVPEARVLDTLVHIWVTSIYGENR.

The segment covering 1–10 has biased composition (polar residues); sequence MTTSAASQAS. A disordered region spans residues 1 to 24; that stretch reads MTTSAASQASLPRGRRTARPSGDD. Residues 23–83 enclose the HTH tetR-type domain; the sequence is DDRELAILAT…TLLDRVVNQA (61 aa). A DNA-binding region (H-T-H motif) is located at residues 46–65; the sequence is SVDDLAKGAGISRPTFYFYF.

Homodimer.

Functionally, involved in the repression of the monooxygenase EthA which is responsible of the formation of the active metabolite of ethionamide (ETH). This is HTH-type transcriptional regulator EthR (ethR) from Mycobacterium bovis (strain ATCC BAA-935 / AF2122/97).